Here is a 373-residue protein sequence, read N- to C-terminus: D-alanine--D-alanine ligase A (373 aa).

In terms of domain architecture, ATP-grasp spans K146–D355. An ATP-binding site is contributed by V179–E234. Residues D308, E322, and N324 each contribute to the Mg(2+) site.

The protein belongs to the D-alanine--D-alanine ligase family. It depends on Mg(2+) as a cofactor. Requires Mn(2+) as cofactor.

The protein localises to the cytoplasm. The enzyme catalyses 2 D-alanine + ATP = D-alanyl-D-alanine + ADP + phosphate + H(+). It functions in the pathway cell wall biogenesis; peptidoglycan biosynthesis. Functionally, cell wall formation. This Bradyrhizobium diazoefficiens (strain JCM 10833 / BCRC 13528 / IAM 13628 / NBRC 14792 / USDA 110) protein is D-alanine--D-alanine ligase A.